The primary structure comprises 392 residues: 8-amino-7-oxononanoate synthase (392 aa).

Arg19 contacts substrate. Residue Gly106–Tyr107 coordinates pyridoxal 5'-phosphate. His131 serves as a coordination point for substrate. Pyridoxal 5'-phosphate is bound by residues Ser176, His204, and Thr233. Lys236 is modified (N6-(pyridoxal phosphate)lysine). Thr350 provides a ligand contact to substrate.

Belongs to the class-II pyridoxal-phosphate-dependent aminotransferase family. BioF subfamily. In terms of assembly, homodimer. Pyridoxal 5'-phosphate is required as a cofactor.

The catalysed reaction is 6-carboxyhexanoyl-[ACP] + L-alanine + H(+) = (8S)-8-amino-7-oxononanoate + holo-[ACP] + CO2. It participates in cofactor biosynthesis; biotin biosynthesis. Its function is as follows. Catalyzes the decarboxylative condensation of pimeloyl-[acyl-carrier protein] and L-alanine to produce 8-amino-7-oxononanoate (AON), [acyl-carrier protein], and carbon dioxide. This is 8-amino-7-oxononanoate synthase from Stutzerimonas stutzeri (strain A1501) (Pseudomonas stutzeri).